The primary structure comprises 188 residues: Putative manganese efflux pump MntP (188 aa).

The next 6 helical transmembrane spans lie at 3–23 (LSAT…ASIG), 41–61 (LIFG…GMLA), 62–82 (SQFV…FLGG), 107–129 (LLVT…LAFL), 143–163 (ATFL…PLLG), and 168–188 (ILGG…HFAG).

This sequence belongs to the MntP (TC 9.B.29) family.

It localises to the cell inner membrane. Its function is as follows. Probably functions as a manganese efflux pump. The chain is Putative manganese efflux pump MntP from Klebsiella pneumoniae (strain 342).